A 189-amino-acid polypeptide reads, in one-letter code: MSIILGIDPGSRVTGYGVVRQVGHKLEYLGSGVIRTSIDDLPTRLKRIYAGITEIITQFNPNEFAIEQVFMAKNPDSALKLGQARGTAIVAAVNQNLPVFEYSPRTIKQTVVGTGAAEKSQVQEMVVRLLQLSDKPQVDAADALAIAITHANSIHNSLQIANSIAIKTPDKITALLRTKYRRGRLRLKG.

Active-site residues include aspartate 8, glutamate 67, and aspartate 139. Mg(2+) is bound by residues aspartate 8, glutamate 67, and aspartate 139.

The protein belongs to the RuvC family. In terms of assembly, homodimer which binds Holliday junction (HJ) DNA. The HJ becomes 2-fold symmetrical on binding to RuvC with unstacked arms; it has a different conformation from HJ DNA in complex with RuvA. In the full resolvosome a probable DNA-RuvA(4)-RuvB(12)-RuvC(2) complex forms which resolves the HJ. Mg(2+) serves as cofactor.

Its subcellular location is the cytoplasm. The catalysed reaction is Endonucleolytic cleavage at a junction such as a reciprocal single-stranded crossover between two homologous DNA duplexes (Holliday junction).. Its function is as follows. The RuvA-RuvB-RuvC complex processes Holliday junction (HJ) DNA during genetic recombination and DNA repair. Endonuclease that resolves HJ intermediates. Cleaves cruciform DNA by making single-stranded nicks across the HJ at symmetrical positions within the homologous arms, yielding a 5'-phosphate and a 3'-hydroxyl group; requires a central core of homology in the junction. The consensus cleavage sequence is 5'-(A/T)TT(C/G)-3'. Cleavage occurs on the 3'-side of the TT dinucleotide at the point of strand exchange. HJ branch migration catalyzed by RuvA-RuvB allows RuvC to scan DNA until it finds its consensus sequence, where it cleaves and resolves the cruciform DNA. In Histophilus somni (strain 129Pt) (Haemophilus somnus), this protein is Crossover junction endodeoxyribonuclease RuvC.